A 411-amino-acid polypeptide reads, in one-letter code: Dihydrofolate synthase/folylpolyglutamate synthase (411 aa).

53-56 (GKGT) is a binding site for ATP. Ser-77 serves as a coordination point for Mg(2+). 7,8-dihydropteroate-binding positions include 116–119 (TYFE) and 147–149 (LDA). Residue His-167 coordinates Mg(2+). ATP contacts are provided by Arg-283 and Asp-296.

Belongs to the folylpolyglutamate synthase family. In terms of assembly, monomer. The cofactor is Mg(2+).

The enzyme catalyses 7,8-dihydropteroate + L-glutamate + ATP = 7,8-dihydrofolate + ADP + phosphate + H(+). It carries out the reaction (6S)-5,6,7,8-tetrahydrofolyl-(gamma-L-Glu)(n) + L-glutamate + ATP = (6S)-5,6,7,8-tetrahydrofolyl-(gamma-L-Glu)(n+1) + ADP + phosphate + H(+). It catalyses the reaction 10-formyltetrahydrofolyl-(gamma-L-Glu)(n) + L-glutamate + ATP = 10-formyltetrahydrofolyl-(gamma-L-Glu)(n+1) + ADP + phosphate + H(+). The catalysed reaction is (6R)-5,10-methylenetetrahydrofolyl-(gamma-L-Glu)(n) + L-glutamate + ATP = (6R)-5,10-methylenetetrahydrofolyl-(gamma-L-Glu)(n+1) + ADP + phosphate + H(+). The protein operates within cofactor biosynthesis; tetrahydrofolate biosynthesis; 7,8-dihydrofolate from 2-amino-4-hydroxy-6-hydroxymethyl-7,8-dihydropteridine diphosphate and 4-aminobenzoate: step 2/2. It participates in cofactor biosynthesis; tetrahydrofolylpolyglutamate biosynthesis. In terms of biological role, functions in two distinct reactions of the de novo folate biosynthetic pathway. Catalyzes the addition of a glutamate residue to dihydropteroate (7,8-dihydropteroate or H2Pte) to form dihydrofolate (7,8-dihydrofolate monoglutamate or H2Pte-Glu). Also catalyzes successive additions of L-glutamate to tetrahydrofolate or 10-formyltetrahydrofolate or 5,10-methylenetetrahydrofolate, leading to folylpolyglutamate derivatives. This Buchnera aphidicola subsp. Acyrthosiphon pisum (strain APS) (Acyrthosiphon pisum symbiotic bacterium) protein is Dihydrofolate synthase/folylpolyglutamate synthase (folC).